The following is a 245-amino-acid chain: Glutathione S-transferase F4 (245 aa).

Residues 25–106 enclose the GST N-terminal domain; it reads AGYKVHGDPF…YIAYVHSSRG (82 aa). Residues 35–36, 64–65, 77–78, and 90–91 contribute to the glutathione site; these read ST, HK, QV, and ES. The GST C-terminal domain occupies 114–244; the sequence is SHETMATLTM…QEKSWFNKPR (131 aa).

It belongs to the GST superfamily. Phi family.

Its subcellular location is the cytoplasm. It is found in the cytosol. It catalyses the reaction RX + glutathione = an S-substituted glutathione + a halide anion + H(+). May be involved in the conjugation of reduced glutathione to a wide number of exogenous and endogenous hydrophobic electrophiles and have a detoxification role against certain herbicides. This is Glutathione S-transferase F4 (GSTF4) from Arabidopsis thaliana (Mouse-ear cress).